The chain runs to 397 residues: T-box transcription factor TBX19 (397 aa).

A DNA-binding region (T-box) is located at residues leucine 48–aspartate 216. The interval arginine 220 to cysteine 248 is disordered.

The protein resides in the nucleus. Its function is as follows. May be involved in the initial formation of the chordamesoderm. In Gallus gallus (Chicken), this protein is T-box transcription factor TBX19.